A 617-amino-acid polypeptide reads, in one-letter code: Chaperone protein HscA homolog (617 aa).

Belongs to the heat shock protein 70 family.

Probable chaperone. Has a low intrinsic ATPase activity which is markedly stimulated by HscB. This is Chaperone protein HscA homolog from Vibrio parahaemolyticus serotype O3:K6 (strain RIMD 2210633).